Reading from the N-terminus, the 347-residue chain is Beta carbonic anhydrase 1, chloroplastic (347 aa).

A chloroplast-targeting transit peptide spans 1–113 (MSTAPLSGFF…AAAKVEQITA (113 aa)). Ala-114 is subject to N-acetylalanine. Ser-175 is modified (phosphoserine). The residue at position 203 (Tyr-203) is a Phosphotyrosine. At Ser-266 the chain carries Phosphoserine. At Cys-280 the chain carries S-nitrosocysteine.

This sequence belongs to the beta-class carbonic anhydrase family. In terms of assembly, homohexamer. In terms of processing, S-nitrosylation at Cys-280 is up-regulated during nitrosative burst and suppresses both binding of salicylic acid and carbonic anhydrase activity. S-nitrosylated in response to an avirulent but not to a virulent bacterial strain. Strongly expressed in aerial tissues including leaves, stems, flowers and siliques. Accumulates in both guard cells and mesophyll cells.

The protein localises to the plastid. Its subcellular location is the chloroplast stroma. It is found in the cell membrane. It carries out the reaction hydrogencarbonate + H(+) = CO2 + H2O. Reversible hydration of carbon dioxide. Required for photosynthesis in cotyledons. Binds salicylic acid. Together with BCA4, involved in the CO(2) signaling pathway which controls gas-exchange between plants and the atmosphere by modulating stomatal development and movements. Promotes water use efficiency. The chain is Beta carbonic anhydrase 1, chloroplastic from Arabidopsis thaliana (Mouse-ear cress).